Here is a 338-residue protein sequence, read N- to C-terminus: Anthranilate phosphoribosyltransferase (338 aa).

5-phospho-alpha-D-ribose 1-diphosphate-binding positions include glycine 82, 85 to 86 (GD), threonine 90, 92 to 95 (NIST), 110 to 118 (KHGNRAASS), and serine 122. An anthranilate-binding site is contributed by glycine 82. A Mg(2+)-binding site is contributed by serine 94. Position 113 (asparagine 113) interacts with anthranilate. Arginine 168 contacts anthranilate. Aspartate 226 and glutamate 227 together coordinate Mg(2+).

The protein belongs to the anthranilate phosphoribosyltransferase family. In terms of assembly, homodimer. It depends on Mg(2+) as a cofactor.

The catalysed reaction is N-(5-phospho-beta-D-ribosyl)anthranilate + diphosphate = 5-phospho-alpha-D-ribose 1-diphosphate + anthranilate. Its pathway is amino-acid biosynthesis; L-tryptophan biosynthesis; L-tryptophan from chorismate: step 2/5. Functionally, catalyzes the transfer of the phosphoribosyl group of 5-phosphorylribose-1-pyrophosphate (PRPP) to anthranilate to yield N-(5'-phosphoribosyl)-anthranilate (PRA). The sequence is that of Anthranilate phosphoribosyltransferase from Deinococcus radiodurans (strain ATCC 13939 / DSM 20539 / JCM 16871 / CCUG 27074 / LMG 4051 / NBRC 15346 / NCIMB 9279 / VKM B-1422 / R1).